A 332-amino-acid chain; its full sequence is Mitochondrial glycine transporter (332 aa).

Solcar repeat units follow at residues 11 to 94 (SSSY…LRQN), 121 to 205 (LSNL…LKKR), and 235 to 319 (TSAS…LIRR). Helical transmembrane passes span 17–42 (FGAGLGSGILSAVLLQPADLLKTRVQ), 69–95 (GTVPSALRTGFGSAIYFTSLNALRQNV), 127–152 (LTTGAVARAGAGFILMPMTIIKVRYE), 180–203 (GFGATAIRDAPYAGLYVLFYEELK), 239–265 (INFGSGVLAAGLATAITNPFDAIKTRI), and 294–312 (GLGLRMGRKAVSSALAWTI).

The protein belongs to the mitochondrial carrier (TC 2.A.29) family. SLC25A38 subfamily.

Its subcellular location is the mitochondrion inner membrane. It catalyses the reaction glycine(in) = glycine(out). Mitochondrial glycine transporter that imports glycine into the mitochondrial matrix. Plays an important role in providing glycine for the first enzymatic step in heme biosynthesis, the condensation of glycine with succinyl-CoA to produce 5-aminolevulinate (ALA) in the mitochondrial matrix. In Botryotinia fuckeliana (strain B05.10) (Noble rot fungus), this protein is Mitochondrial glycine transporter.